We begin with the raw amino-acid sequence, 245 residues long: Ribosomal RNA small subunit methyltransferase G (245 aa).

S-adenosyl-L-methionine contacts are provided by residues Gly90, Leu95, 140 to 141 (AE), and Arg158.

The protein belongs to the methyltransferase superfamily. RNA methyltransferase RsmG family.

It localises to the cytoplasm. In terms of biological role, specifically methylates the N7 position of guanine in position 518 of 16S rRNA. The polypeptide is Ribosomal RNA small subunit methyltransferase G (Mycobacterium leprae (strain TN)).